The sequence spans 100 residues: Tachykinin-4 (100 aa).

The signal sequence occupies residues M1–A19. Propeptides lie at residues E20–V55 and R85–E100. Positions G80–E100 are disordered.

It belongs to the tachykinin family.

It localises to the secreted. Tachykinins are active peptides which excite neurons, evoke behavioral responses, are potent vasodilators and secretagogues, and contract (directly or indirectly) many smooth muscles. This chain is Tachykinin-4, found in Oryctolagus cuniculus (Rabbit).